Consider the following 407-residue polypeptide: MTMMSDLSEDLVEEILCRVSITSLGAVRSTCKGWYVLSKTRVLCKAETKHQFLGFMKKNYKLCSMRFDLHGNFNEEGGEEFMNPSIKKSGNLLDQLDICKVFQCDGLLLCVTKEENTRLVVWNPYSGQIRWIKCNNSYHRYEGYAIGYNNNRKHKILRFSDMSFSTYKIYDFISNSWRVLDIAPNWHINPDQRGASLKGNTYFFAREKREDEEDEDILWQPVEYLLCFDFTTENFGQLHPLPFEQYIDDAGALSSFGEEKLAALFQSFASSVVEIWVTSMIEANAVSWIPFLKVDMKPHCSFRFRLPFDGGSFFIDEEKKVAVVIHVDVVAESEMNRYEDVAYIIGENGYVKKVCLVEAVNQGGSLNLSKRSCCNYPHVCCSSYVPSLAQINQSVEFENEREEEEAN.

Residues 2-49 enclose the F-box domain; sequence TMMSDLSEDLVEEILCRVSITSLGAVRSTCKGWYVLSKTRVLCKAETK.

This is Putative F-box protein At5g60560 from Arabidopsis thaliana (Mouse-ear cress).